The chain runs to 63 residues: Laccase-C1 (63 aa).

It belongs to the multicopper oxidase family. Monomer. Requires Cu cation as cofactor. Glycosylated; contains 16% carbohydrates.

It is found in the secreted. It carries out the reaction 4 hydroquinone + O2 = 4 benzosemiquinone + 2 H2O. With respect to regulation, inhibited by sodium azide. Lignin degradation and detoxification of lignin-derived products. Oxidation of a broad range of substrates including mono-, di- and polyphenols, aromatic amines and methoxy-substituted phenols accompanied by reduction of oxygen to water. The chain is Laccase-C1 from Cerrena unicolor (Canker rot fungus).